A 93-amino-acid chain; its full sequence is Consomatin G2 (93 aa).

The first 18 residues, 1-18, serve as a signal peptide directing secretion; sequence MQTAYWVMLMMMVCITAP. The propeptide occupies 19-69; it reads LPEGGKPNSGIRGLVPNDLTPQHTLRSLISRRQTDVLLDATLLTTPAPEQR. Cys-72 and Cys-77 are disulfide-bonded. Trp-74 is subject to D-tryptophan. Positions 79–93 are excised as a propeptide; sequence WRPYPWRRRDLNGKR.

Belongs to the conotoxin C superfamily. Consomatin family. Expressed by the venom duct.

The protein resides in the secreted. In terms of biological role, moderately activates human somatostatin receptors (SSTR) with a preferential activation of SSTR1 and SSTR4. In vivo, does not cause behavioral changes in mice within a few minutes of intracranial injection, but causes a progressive loss of movement thereafter. Four to five hours after injection, mice recover, even with the highest dose tested. Shows antinociception and antihyperalgesia activities in two mouse models of acute pain, most probably by acting outside the central nervous system. The protein is Consomatin G2 of Conus geographus (Geography cone).